Reading from the N-terminus, the 493-residue chain is Cytoplasmic tRNA 2-thiolation protein 2 (493 aa).

Ser489 is modified (phosphoserine).

It belongs to the CTU2/NCS2 family. As to quaternary structure, interacts with NCS6 and URM1. May act by forming a heterodimer with NCS6.

Its subcellular location is the cytoplasm. It functions in the pathway tRNA modification; 5-methoxycarbonylmethyl-2-thiouridine-tRNA biosynthesis. Its function is as follows. Plays a central role in 2-thiolation of mcm(5)S(2)U at tRNA wobble positions of tRNA(Lys), tRNA(Glu) and tRNA(Gln). May act by forming a heterodimer with NCS6 that ligates sulfur from thiocarboxylated URM1 onto the uridine of tRNAs at wobble position. Prior mcm(5) tRNA modification by the elongator complex is required for 2-thiolation. May also be involved in protein urmylation. The protein is Cytoplasmic tRNA 2-thiolation protein 2 of Saccharomyces cerevisiae (strain RM11-1a) (Baker's yeast).